The following is a 762-amino-acid chain: Acyl-homoserine lactone acylase PvdQ (762 aa).

A signal peptide spans 1-23 (MGMRTVLTGLAGMLLGSMMPVQA). The propeptide at 194–216 (ALSGEQAFQVAEQRRQRFRLERG) is spacer peptide. S217 functions as the Nucleophile in the catalytic mechanism.

It belongs to the peptidase S45 family. Heterodimer of an alpha subunit and a beta subunit processed from the same precursor.

It is found in the periplasm. The catalysed reaction is an N-acyl-L-homoserine lactone + H2O = L-homoserine lactone + a carboxylate. Its function is as follows. Catalyzes the deacylation of acyl-homoserine lactone (AHL or acyl-HSL), releasing homoserine lactone (HSL) and the corresponding fatty acid. Possesses a specificity for the degradation of long-chain acyl-HSLs (side chains of 11 to 14 carbons in length). Degrades 3-oxo-C12-HSL, one of the two main AHL signal molecules of P.aeruginosa, and thereby functions as a quorum quencher, inhibiting the las quorum-sensing system. Therefore, may enable P.aeruginosa to modulate its own quorum-sensing-dependent pathogenic potential. Also appears to be required for pyoverdin biosynthesis. In Pseudomonas aeruginosa (strain ATCC 15692 / DSM 22644 / CIP 104116 / JCM 14847 / LMG 12228 / 1C / PRS 101 / PAO1), this protein is Acyl-homoserine lactone acylase PvdQ (pvdQ).